A 269-amino-acid polypeptide reads, in one-letter code: Oligoribonuclease, mitochondrial (269 aa).

The Exonuclease domain occupies 55–227; that stretch reads LVWIDCEMTG…SDIKESIAQL (173 aa). Tyr184 is a catalytic residue. The interval 240 to 269 is disordered; it reads ETESVESIGSEQPESPSSSTSSLKRQRTDF. Over residues 245 to 261 the composition is skewed to low complexity; sequence ESIGSEQPESPSSSTSS.

Belongs to the oligoribonuclease family.

Its subcellular location is the mitochondrion. 3'-to-5' exoribonuclease specific for small oligoribonucleotides. This is Oligoribonuclease, mitochondrial (REX2) from Saccharomyces cerevisiae (strain ATCC 204508 / S288c) (Baker's yeast).